The primary structure comprises 204 residues: Ras-related protein Rab-7L1 (204 aa).

GTP-binding residues include serine 33, lysine 34, histidine 35, tyrosine 36, lysine 37, and threonine 39. The Effector region motif lies at 36–44 (YKSTVGVDF). The residue at position 71 (threonine 71) is a Phosphothreonine; by LRRK2. Position 72 is a phosphoserine (serine 72). GTP contacts are provided by lysine 126, valine 156, and lysine 157. Residues cysteine 203 and cysteine 204 are each lipidated (S-geranylgeranyl cysteine).

It belongs to the small GTPase superfamily. Rab family. As to quaternary structure, interacts with LRRK2 (via the N-terminus); this interaction is direct and stimulates kinase activity. In terms of tissue distribution, expressed predominantly in kidney and much less in brain, heart, muscle, fat, liver, spleen, adrenal gland, ovary, thymus and lung. Not expressed in testis and intestine.

Its subcellular location is the cell membrane. It is found in the cytoplasm. It localises to the perinuclear region. The protein resides in the golgi apparatus. The protein localises to the golgi apparatus membrane. Its subcellular location is the trans-Golgi network. It is found in the cytoskeleton. Functionally, the small GTPases Rab are key regulators in vesicle trafficking. Essential for maintaining the integrity of endosome-trans-Golgi network structure. Together with LRRK2, plays a role in the retrograde trafficking pathway for recycling proteins, such as mannose 6 phosphate receptor (M6PR), between lysosomes and the Golgi apparatus in a retromer-dependent manner. Recruits LRRK2 to the Golgi apparatus and stimulates LRRK2 kinase activity. Stimulates phosphorylation of RAB10 'Thr-73' by LRRK2. Regulates also neuronal process morphology in the intact central nervous system (CNS). The sequence is that of Ras-related protein Rab-7L1 (Rab29) from Rattus norvegicus (Rat).